Reading from the N-terminus, the 294-residue chain is tRNA dimethylallyltransferase (294 aa).

10–17 (GPTAVGKT) provides a ligand contact to ATP. 12–17 (TAVGKT) contributes to the substrate binding site. Residues 35-38 (DSQQ) form an interaction with substrate tRNA region.

This sequence belongs to the IPP transferase family. Monomer. The cofactor is Mg(2+).

It catalyses the reaction adenosine(37) in tRNA + dimethylallyl diphosphate = N(6)-dimethylallyladenosine(37) in tRNA + diphosphate. Catalyzes the transfer of a dimethylallyl group onto the adenine at position 37 in tRNAs that read codons beginning with uridine, leading to the formation of N6-(dimethylallyl)adenosine (i(6)A). The chain is tRNA dimethylallyltransferase from Streptococcus pneumoniae (strain Taiwan19F-14).